We begin with the raw amino-acid sequence, 261 residues long: Ribosomal RNA small subunit methyltransferase G (261 aa).

Residues Gly94, Leu99, 117–119 (EST), 145–146 (VE), and Arg164 contribute to the S-adenosyl-L-methionine site.

Belongs to the methyltransferase superfamily. RNA methyltransferase RsmG family.

The protein resides in the cytoplasm. Functionally, specifically methylates the N7 position of a guanine in 16S rRNA. This chain is Ribosomal RNA small subunit methyltransferase G, found in Rubrobacter xylanophilus (strain DSM 9941 / JCM 11954 / NBRC 16129 / PRD-1).